Consider the following 500-residue polypeptide: NAD(P)H-quinone oxidoreductase chain 4, chloroplastic (500 aa).

Transmembrane regions (helical) follow at residues 4-24 (FPWL…IFFL), 31-51 (VIFW…TYAF), 84-104 (GLSI…TLAA), 111-131 (ARLF…LFSC), 134-154 (LLLF…LLSM), 167-187 (FILY…GIGL), 212-232 (IFYI…PLHT), 242-262 (HYST…YGLV), 272-292 (AHSL…IYAA), 308-328 (SSVS…DIGL), 330-350 (GALL…FLAG), 386-406 (LALP…GLIT), 411-431 (LLMA…LTPI), and 462-482 (LFLS…PDFV).

It belongs to the complex I subunit 4 family.

The protein localises to the plastid. The protein resides in the chloroplast thylakoid membrane. The catalysed reaction is a plastoquinone + NADH + (n+1) H(+)(in) = a plastoquinol + NAD(+) + n H(+)(out). The enzyme catalyses a plastoquinone + NADPH + (n+1) H(+)(in) = a plastoquinol + NADP(+) + n H(+)(out). In Jasminum nudiflorum (Winter jasmine), this protein is NAD(P)H-quinone oxidoreductase chain 4, chloroplastic.